Reading from the N-terminus, the 256-residue chain is Ethylene-responsive transcription factor ERF084 (256 aa).

Positions 115-172 (GFMGVRKRPWGRWSAEIRDRIGRCRHWLGTFDTAEEAARAYDAAARRLRGTKAKTNFV) form a DNA-binding region, AP2/ERF.

Belongs to the AP2/ERF transcription factor family. ERF subfamily.

It localises to the nucleus. Functionally, probably acts as a transcriptional activator. Binds to the GCC-box pathogenesis-related promoter element. May be involved in the regulation of gene expression by stress factors and by components of stress signal transduction pathways. This is Ethylene-responsive transcription factor ERF084 (ERF084) from Arabidopsis thaliana (Mouse-ear cress).